The following is a 276-amino-acid chain: Diaminopimelate epimerase (276 aa).

Substrate-binding residues include N13, Q46, and N66. The Proton donor role is filled by C75. Substrate is bound by residues 76–77 (GN), N159, N192, and 210–211 (ER). C219 acts as the Proton acceptor in catalysis. Residue 220–221 (GS) participates in substrate binding.

This sequence belongs to the diaminopimelate epimerase family. As to quaternary structure, homodimer.

Its subcellular location is the cytoplasm. The enzyme catalyses (2S,6S)-2,6-diaminopimelate = meso-2,6-diaminopimelate. The protein operates within amino-acid biosynthesis; L-lysine biosynthesis via DAP pathway; DL-2,6-diaminopimelate from LL-2,6-diaminopimelate: step 1/1. Its function is as follows. Catalyzes the stereoinversion of LL-2,6-diaminopimelate (L,L-DAP) to meso-diaminopimelate (meso-DAP), a precursor of L-lysine and an essential component of the bacterial peptidoglycan. This is Diaminopimelate epimerase from Vibrio campbellii (strain ATCC BAA-1116).